We begin with the raw amino-acid sequence, 541 residues long: Transcription factor STP2 (541 aa).

Positions 13–32 (VLTRIYDYLKALVQQVIVPN) are i. Positions 35–58 (DDKSSKSTPFEKLEPAKQNHPQKD) are disordered. Residues 73 to 105 (LFPKQNNKQLSLTSKSSVVPCALNLDNLETPFS) form an II region. A C2H2-type 1 zinc finger spans residues 204 to 226 (YICHYCDARFRIRGYLTRHIKKH). The C2H2-type 2; atypical zinc-finger motif lies at 232–267 (YHCPFFDNSISQELRCHTSGGFSRRDTYKTHLKSRH). The C2H2-type 3; atypical zinc-finger motif lies at 284 to 309 (GVCTQCGEHFSTSESWVENHIEAGSC). Low complexity predominate over residues 452–462 (SSASSALSPLS). The disordered stretch occupies residues 452-497 (SSASSALSPLSGDPITTTETNKSYPLDSEQSLLEPDKTEEDAINQS). The segment covering 465–482 (PITTTETNKSYPLDSEQS) has biased composition (polar residues).

As to quaternary structure, interacts (via Region II) with SSY5; protease component of the SPS-sensor. Activated by the amino acid-induced proteolytic removal of an N-terminal inhibitory domain by serine protease SSY5, an intrinsic component of the SPS-sensor. Processing requires at least 2 components of the SCF(GRR1) ubiquitin ligase complex, namely the F-box protein GRR1 and the E2 enzyme CDC34, but does not depend on the proteasome. Processing is negatively regulated by the protein phosphatase 2A regulatory subunit RTS1.

The protein localises to the cell membrane. The protein resides in the nucleus. Transcription factor involved in the regulation of gene expression in response to extracellular amino acid levels. Synthesized as latent cytoplasmic precursor, which, upon a signal initiated by the plasma membrane SPS (SSY1-PTR3-SSY5) amino acid sensor system, becomes proteolytically activated and relocates to the nucleus, where it induces the expression of SPS-sensor-regulated genes, including the amino-acid permeases BAP2 and BAP3. Binding to promoters is facilitated by DAL81. Involved in the repression of genes subject to nitrogen catabolite repression and genes involved in stress response. Negatively regulated by inner nuclear membrane proteins ASI1, ASI2 and ASI3, which prevent unprocessed precursor forms that escape cytoplasmic anchoring from inducing SPS-sensor-regulated genes. The chain is Transcription factor STP2 (STP2) from Saccharomyces cerevisiae (strain ATCC 204508 / S288c) (Baker's yeast).